The sequence spans 684 residues: Histamine oxidase (684 aa).

Position 316-327 (tyrosine 316–aspartate 327) interacts with substrate. Aspartate 318 serves as the catalytic Proton acceptor. An intrachain disulfide couples cysteine 337 to cysteine 363. Substrate is bound at residue valine 399–tyrosine 404. Tyrosine 402 acts as the Schiff-base intermediate with substrate; via topaquinone in catalysis. Position 402 is a 2',4',5'-topaquinone (tyrosine 402). Cu cation contacts are provided by histidine 451 and histidine 453. Ca(2+) is bound by residues aspartate 460, glutamate 500, tyrosine 590, and aspartate 601. Residue aspartate 460 participates in Mn(2+) binding. Aspartate 601 is a binding site for Mn(2+). Histidine 612 is a binding site for Cu cation. Positions serine 647–histidine 684 are disordered. Residues aspartate 675 to histidine 684 show a composition bias toward gly residues.

Belongs to the copper/topaquinone oxidase family. In terms of assembly, homodimer. It depends on Cu cation as a cofactor. Zn(2+) serves as cofactor. Requires Ca(2+) as cofactor. L-topaquinone is required as a cofactor. The cofactor is Mn(2+). Topaquinone (TPQ) is generated by copper-dependent autoxidation of a specific tyrosyl residue.

The protein resides in the cytoplasm. It carries out the reaction a primary methyl amine + O2 + H2O = an aldehyde + H2O2 + NH4(+). It catalyses the reaction histamine + O2 + H2O = imidazole-4-acetaldehyde + H2O2 + NH4(+). Its function is as follows. Oxidizes histamine. Other amines including phenethylamine, tyramine, tryptamine, putrescine, and benzylamine also serve as substrate. The sequence is that of Histamine oxidase from Arthrobacter globiformis.